Here is a 38-residue protein sequence, read N- to C-terminus: Large ribosomal subunit protein bL36A (38 aa).

The protein belongs to the bacterial ribosomal protein bL36 family.

This chain is Large ribosomal subunit protein bL36A, found in Cronobacter sakazakii (strain ATCC BAA-894) (Enterobacter sakazakii).